Consider the following 207-residue polypeptide: Small ribosomal subunit protein uS7y (207 aa).

An N-acetylalanine modification is found at A2.

The protein belongs to the universal ribosomal protein uS7 family. In terms of tissue distribution, expressed in root tips, lateral root primordia, leaf primordia, shoot apical meristem and vasculature of cotyledons.

This Arabidopsis thaliana (Mouse-ear cress) protein is Small ribosomal subunit protein uS7y.